A 145-amino-acid chain; its full sequence is Transcription factor MEE8 (145 aa).

Residues 33–49 are compositionally biased toward basic and acidic residues; sequence EKGVEKVGQKRSAESRR. Residues 33–61 are disordered; sequence EKGVEKVGQKRSAESRREGKKKRVKTQCV. The bHLH domain maps to 66–115; it reads DKSDHDTLLKKKRRERIRRQLETLKEITPNCPQSDINAILDCVIEYTNNL.

In terms of assembly, homodimer.

The protein resides in the nucleus. Required during early embryo development, for the endosperm formation. This is Transcription factor MEE8 (MEE8) from Arabidopsis thaliana (Mouse-ear cress).